The chain runs to 356 residues: Heparan sulfate 2-O-sulfotransferase 1 (356 aa).

Residues 1–11 (MGLLRIMMPPK) are Cytoplasmic-facing. The chain crosses the membrane as a helical; Signal-anchor for type II membrane protein span at residues 12-28 (LQLLAVVAFAVAMLFLE). Residues 24–51 (MLFLENQIQKLEESRAKLERAIARHEVR) are a coiled coil. At 29–356 (NQIQKLEESR…FYEKIYPKSN (328 aa)) the chain is on the lumenal side. Adenosine 3',5'-bisphosphate is bound by residues Lys-83, Thr-84, Ala-85, Ser-86, Thr-87, and Ser-88. N-linked (GlcNAc...) asparagine glycans are attached at residues Asn-108 and Asn-127. Residues His-140 and His-142 contribute to the active site. Positions 164 and 172 each coordinate adenosine 3',5'-bisphosphate. Cystine bridges form between Cys-201–Cys-209 and Cys-222–Cys-228. The adenosine 3',5'-bisphosphate site is built by Tyr-279, Ser-285, Thr-290, and Lys-293.

The protein belongs to the sulfotransferase 3 family. Homotrimer. Interacts with the C5-epimerase GLCE. In terms of processing, N-glycosylated.

Its subcellular location is the golgi apparatus membrane. Functionally, catalyzes the transfer of a sulfo group from 3'-phospho-5'-adenylyl sulfate (PAPS) to the 2-OH position of iduronic acid (IdoA) or glucuronic acid (GlcA) within the heparan sulfate (HS) chain and participates in HS biosynthesis. Required for metanephric development of kidney formation, suggesting that 2-O-sulfation within HS is essential for signaling between ureteric bud and metanephric mesenchyme. The polypeptide is Heparan sulfate 2-O-sulfotransferase 1 (Cricetulus griseus (Chinese hamster)).